A 490-amino-acid polypeptide reads, in one-letter code: Glucose-6-phosphate 1-dehydrogenase (490 aa).

NADP(+) is bound by residues R48, 90–91, and K145; that span reads DI. Substrate-binding residues include H175, K179, E213, and D232. Residue H237 is the Proton acceptor of the active site. Positions 340 and 345 each coordinate substrate.

The protein belongs to the glucose-6-phosphate dehydrogenase family.

The catalysed reaction is D-glucose 6-phosphate + NADP(+) = 6-phospho-D-glucono-1,5-lactone + NADPH + H(+). The protein operates within carbohydrate degradation; pentose phosphate pathway; D-ribulose 5-phosphate from D-glucose 6-phosphate (oxidative stage): step 1/3. In terms of biological role, catalyzes the oxidation of glucose 6-phosphate to 6-phosphogluconolactone. In Buchnera aphidicola subsp. Baizongia pistaciae (strain Bp), this protein is Glucose-6-phosphate 1-dehydrogenase.